A 193-amino-acid polypeptide reads, in one-letter code: Xanthine phosphoribosyltransferase (193 aa).

2 residues coordinate xanthine: L20 and T27. 128–132 (ANGQA) contributes to the 5-phospho-alpha-D-ribose 1-diphosphate binding site. Position 156 (K156) interacts with xanthine.

The protein belongs to the purine/pyrimidine phosphoribosyltransferase family. Xpt subfamily. In terms of assembly, homodimer.

The protein resides in the cytoplasm. The enzyme catalyses XMP + diphosphate = xanthine + 5-phospho-alpha-D-ribose 1-diphosphate. Its pathway is purine metabolism; XMP biosynthesis via salvage pathway; XMP from xanthine: step 1/1. In terms of biological role, converts the preformed base xanthine, a product of nucleic acid breakdown, to xanthosine 5'-monophosphate (XMP), so it can be reused for RNA or DNA synthesis. The polypeptide is Xanthine phosphoribosyltransferase (Streptococcus equi subsp. zooepidemicus (strain H70)).